The sequence spans 198 residues: tRNA (cytidine(56)-2'-O)-methyltransferase (198 aa).

Residues Leu81, 110–114 (GAEKV), and 128–135 (IGNQPHSE) each bind S-adenosyl-L-methionine. The disordered stretch occupies residues 178–198 (DAKQAEASGEGASRKNGQLPS).

It belongs to the aTrm56 family. Homodimer.

It localises to the cytoplasm. The enzyme catalyses cytidine(56) in tRNA + S-adenosyl-L-methionine = 2'-O-methylcytidine(56) in tRNA + S-adenosyl-L-homocysteine + H(+). In terms of biological role, specifically catalyzes the AdoMet-dependent 2'-O-ribose methylation of cytidine at position 56 in tRNAs. In Pyrococcus abyssi (strain GE5 / Orsay), this protein is tRNA (cytidine(56)-2'-O)-methyltransferase.